We begin with the raw amino-acid sequence, 292 residues long: Fat storage-inducing transmembrane protein 1 (292 aa).

At Met1 to Arg18 the chain is on the lumenal side. A helical membrane pass occupies residues Ala19–Gly39. The Cytoplasmic portion of the chain corresponds to Ser40–Arg54. The helical transmembrane segment at Leu55–Asn75 threads the bilayer. The Lumenal portion of the chain corresponds to Pro76 to Ser94. The chain crosses the membrane as a helical span at residues Ala95–Thr115. Topologically, residues Arg116 to Ala141 are cytoplasmic. Residues Phe142 to Leu162 traverse the membrane as a helical segment. Residues His163 to Thr187 are Lumenal-facing. The active site involves His186. A helical transmembrane segment spans residues Phe188–Leu208. The Cytoplasmic segment spans residues Ala209–Leu220. A helical transmembrane segment spans residues Val221–Ile241. At Tyr242–Lys249 the chain is on the lumenal side. Residue His244 is part of the active site. The chain crosses the membrane as a helical span at residues Val250–Gln270. Residues Pro271–Asn292 are Cytoplasmic-facing.

The protein belongs to the FIT family. FIT1 subfamily.

It is found in the endoplasmic reticulum membrane. Its function is as follows. Plays an important role in the formation of lipid droplets (LDs) which are storage organelles at the center of lipid and energy homeostasis. Directly binds to diacylglycerol (DAGs) and triacylglycerol. In Bos taurus (Bovine), this protein is Fat storage-inducing transmembrane protein 1.